The sequence spans 299 residues: Polyamine aminopropyltransferase (299 aa).

Residues 6–252 (IVLLFALLCT…SLPNQQALQQ (247 aa)) enclose the PABS domain. S-methyl-5'-thioadenosine-binding positions include Q36, E120, and 147 to 148 (DA). D168 acts as the Proton acceptor in catalysis.

Belongs to the spermidine/spermine synthase family. As to quaternary structure, homodimer or homotetramer.

Its subcellular location is the cytoplasm. The enzyme catalyses S-adenosyl 3-(methylsulfanyl)propylamine + putrescine = S-methyl-5'-thioadenosine + spermidine + H(+). It functions in the pathway amine and polyamine biosynthesis; spermidine biosynthesis; spermidine from putrescine: step 1/1. Its function is as follows. Catalyzes the irreversible transfer of a propylamine group from the amino donor S-adenosylmethioninamine (decarboxy-AdoMet) to putrescine (1,4-diaminobutane) to yield spermidine. The polypeptide is Polyamine aminopropyltransferase (Vibrio vulnificus (strain CMCP6)).